Reading from the N-terminus, the 154-residue chain is UPF0225 protein YpsIP31758_1970 (154 aa).

Belongs to the UPF0225 family.

The protein is UPF0225 protein YpsIP31758_1970 of Yersinia pseudotuberculosis serotype O:1b (strain IP 31758).